A 451-amino-acid polypeptide reads, in one-letter code: MKDEQLYYFEKSPVFKAMMHFSLPMMIGTLLSVIYGILNIYFIGFLEDSHMISAISLTLPVFAILMGLGNLFGVGAGTYISRLLGAKDYSKSKFVSSFSIYGGIALGLIVILVTLPFSDQIAAILGARGETLALTSNYLKVMFLSAPFVILFFILEQFARAIGAPMISMIGMLASVGLNIILDPILIFGFDLNVVGAALGTAISNVAAALFFIIYFMKNSDVVSVNIKLAKPNKEMLSEIFKIGIPAFLMSILMGFTGLVLNLFLAHYGNFAIASYGISFRLVQFPELIIMGLCEGVVPLIAYNFMANKGRMKDVIKAVIMSIGVIFVVCMIAVFTIGHHMVGLFTTDQAIVEMATFILKVTMASLLLNGIGFLFTGMLQATGQGRGATIMAILQGAIIIPVLFIMNALFGLTGVIWSLLIAESLCALAAMLIVYLLRDRLTVDTSELIEG.

12 helical membrane-spanning segments follow: residues 26–46, 54–74, 97–117, 139–159, 170–190, 194–214, 245–265, 282–302, 318–338, 355–375, 397–417, and 418–438; these read MIGTLLSVIYGILNIYFIGFL, AISLTLPVFAILMGLGNLFGV, SFSIYGGIALGLIVILVTLPF, LKVMFLSAPFVILFFILEQFA, IGMLASVGLNIILDPILIFGF, VVGAALGTAISNVAAALFFII, IPAFLMSILMGFTGLVLNLFL, LVQFPELIIMGLCEGVVPLIA, AVIMSIGVIFVVCMIAVFTIG, ATFILKVTMASLLLNGIGFLF, AIIIPVLFIMNALFGLTGVIW, and SLLIAESLCALAAMLIVYLLR.

It belongs to the multi antimicrobial extrusion (MATE) (TC 2.A.66.1) family. MepA subfamily.

It localises to the cell membrane. Functionally, multidrug resistance efflux protein. Contributes to resistance to the glycylcycline antibiotic tigecycline. The sequence is that of Multidrug export protein MepA (mepA) from Staphylococcus aureus (strain N315).